The primary structure comprises 212 residues: 3-isopropylmalate dehydratase small subunit (212 aa).

It belongs to the LeuD family. LeuD type 1 subfamily. As to quaternary structure, heterodimer of LeuC and LeuD.

The catalysed reaction is (2R,3S)-3-isopropylmalate = (2S)-2-isopropylmalate. It participates in amino-acid biosynthesis; L-leucine biosynthesis; L-leucine from 3-methyl-2-oxobutanoate: step 2/4. Catalyzes the isomerization between 2-isopropylmalate and 3-isopropylmalate, via the formation of 2-isopropylmaleate. This chain is 3-isopropylmalate dehydratase small subunit, found in Nitrosomonas eutropha (strain DSM 101675 / C91 / Nm57).